We begin with the raw amino-acid sequence, 374 residues long: Type IV secretion system protein PtlG homolog (374 aa).

A helical membrane pass occupies residues 38–56 (WMFALVAVALSCLLATGIW). Residues 87–116 (PREPEPAPLPDMPAAPNPILPQPRPAPPVP) are disordered. The span at 92-116 (PAPLPDMPAAPNPILPQPRPAPPVP) shows a compositional bias: pro residues.

Belongs to the TrbI/VirB10 family.

Its subcellular location is the cell membrane. The polypeptide is Type IV secretion system protein PtlG homolog (ptlG) (Bordetella parapertussis (strain 12822 / ATCC BAA-587 / NCTC 13253)).